The sequence spans 161 residues: Cytochrome c-type biogenesis protein CcmE (161 aa).

The Cytoplasmic portion of the chain corresponds to 1 to 8; the sequence is MNARRKKR. The helical; Signal-anchor for type II membrane protein transmembrane segment at 9–29 threads the bilayer; it reads LALATALIGGVAAIASLLLYA. Topologically, residues 30-161 are periplasmic; it reads LNSNLNLFYT…EYDSTQKTGY (132 aa). Residues H131 and Y135 each coordinate heme.

This sequence belongs to the CcmE/CycJ family.

Its subcellular location is the cell inner membrane. In terms of biological role, heme chaperone required for the biogenesis of c-type cytochromes. Transiently binds heme delivered by CcmC and transfers the heme to apo-cytochromes in a process facilitated by CcmF and CcmH. This is Cytochrome c-type biogenesis protein CcmE from Shewanella loihica (strain ATCC BAA-1088 / PV-4).